The sequence spans 317 residues: Flavin-dependent thymidylate synthase (317 aa).

Serine 46 lines the FAD pocket. The interval phenylalanine 55–threonine 166 is insert. Residues alanine 100–isoleucine 317 form the ThyX domain. Residues glutamine 178–arginine 181, glutamate 189–arginine 193, and arginine 259 each bind dUMP. FAD-binding positions include arginine 181–arginine 183 and glutamate 189. Positions arginine 181–serine 191 match the ThyX motif motif. An FAD-binding site is contributed by asparagine 281. Position 286 (arginine 286) interacts with dUMP. The Involved in ionization of N3 of dUMP, leading to its activation role is filled by arginine 286.

Belongs to the thymidylate synthase ThyX family. As to quaternary structure, homotetramer. FAD serves as cofactor.

The enzyme catalyses dUMP + (6R)-5,10-methylene-5,6,7,8-tetrahydrofolate + NADPH + H(+) = dTMP + (6S)-5,6,7,8-tetrahydrofolate + NADP(+). Its pathway is pyrimidine metabolism; dTTP biosynthesis. In terms of biological role, catalyzes the reductive methylation of 2'-deoxyuridine-5'-monophosphate (dUMP) to 2'-deoxythymidine-5'-monophosphate (dTMP) while utilizing 5,10-methylenetetrahydrofolate (mTHF) as the methyl donor, and NADPH and FADH(2) as the reductant. This Aquifex aeolicus (strain VF5) protein is Flavin-dependent thymidylate synthase.